A 161-amino-acid polypeptide reads, in one-letter code: Cytochrome b6-f complex subunit 4 (161 aa).

3 consecutive transmembrane segments (helical) span residues 37-57 (LLYIFPVVIMGTIALVIGLAV), 96-116 (LLGVLMNASIPLGLMLIPFIE), and 130-150 (AMTVFLFGTLVTLWLGIGAAF).

It belongs to the cytochrome b family. PetD subfamily. The 4 large subunits of the cytochrome b6-f complex are cytochrome b6, subunit IV (17 kDa polypeptide, PetD), cytochrome f and the Rieske protein, while the 4 small subunits are PetG, PetL, PetM and PetN. The complex functions as a dimer.

It is found in the cellular thylakoid membrane. Functionally, component of the cytochrome b6-f complex, which mediates electron transfer between photosystem II (PSII) and photosystem I (PSI), cyclic electron flow around PSI, and state transitions. The protein is Cytochrome b6-f complex subunit 4 of Synechococcus elongatus.